The chain runs to 477 residues: FAD-dependent monooxygenase paxM (477 aa).

The helical transmembrane segment at alanine 4–leucine 24 threads the bilayer. Glutamate 35, glycine 49, and arginine 108 together coordinate FAD. Arginine 195 is an active-site residue. The FAD site is built by aspartate 308 and alanine 321. Residues leucine 446–leucine 466 traverse the membrane as a helical segment.

Belongs to the paxM FAD-dependent monooxygenase family. FAD is required as a cofactor.

It is found in the membrane. It functions in the pathway secondary metabolite biosynthesis. Its function is as follows. FAD-dependent monooxygenase; part of the gene cluster that mediates the biosynthesis of paxilline, a mycotoxin that acts as an inhibitor of mammalian maxi-K channels. PaxG, the geranylgeranyl diphosphate (GGPP) synthase is proposed to catalyze the first step in paxilline biosynthesis. Condensation of indole-3-glycerol phosphate with GGPP by paxC then forms 3-geranylgeranylindole (3-GGI), followed by epoxidation and cyclization of this intermediate (by paxM and paxB) to form paspaline. Paspaline is subsequently converted to 13-desoxypaxilline by paxP, the latter being then converted to paxilline by paxQ. Finally paxilline can be mono- and di-prenylated by paxD. The chain is FAD-dependent monooxygenase paxM from Penicillium paxilli.